Here is a 442-residue protein sequence, read N- to C-terminus: Probable glycine dehydrogenase (decarboxylating) subunit 1 (442 aa).

This sequence belongs to the GcvP family. N-terminal subunit subfamily. As to quaternary structure, the glycine cleavage system is composed of four proteins: P, T, L and H. In this organism, the P 'protein' is a heterodimer of two subunits.

It catalyses the reaction N(6)-[(R)-lipoyl]-L-lysyl-[glycine-cleavage complex H protein] + glycine + H(+) = N(6)-[(R)-S(8)-aminomethyldihydrolipoyl]-L-lysyl-[glycine-cleavage complex H protein] + CO2. Its function is as follows. The glycine cleavage system catalyzes the degradation of glycine. The P protein binds the alpha-amino group of glycine through its pyridoxal phosphate cofactor; CO(2) is released and the remaining methylamine moiety is then transferred to the lipoamide cofactor of the H protein. This chain is Probable glycine dehydrogenase (decarboxylating) subunit 1, found in Phenylobacterium zucineum (strain HLK1).